A 33-amino-acid chain; its full sequence is MLFTFAWASLAAIFTFSIAMVVWGRNGDGTIDL.

The chain crosses the membrane as a helical span at residues 2-22; the sequence is LFTFAWASLAAIFTFSIAMVV.

The protein belongs to the PetN family. The 4 large subunits of the cytochrome b6-f complex are cytochrome b6, subunit IV (17 kDa polypeptide, PetD), cytochrome f and the Rieske protein, while the 4 small subunits are PetG, PetL, PetM and PetN. The complex functions as a dimer.

The protein resides in the cellular thylakoid membrane. Component of the cytochrome b6-f complex, which mediates electron transfer between photosystem II (PSII) and photosystem I (PSI), cyclic electron flow around PSI, and state transitions. This chain is Cytochrome b6-f complex subunit 8, found in Prochlorococcus marinus (strain SARG / CCMP1375 / SS120).